The chain runs to 259 residues: Aminoglycoside 3'-phosphotransferase (259 aa).

Catalysis depends on D187, which acts as the Proton acceptor.

The protein belongs to the aminoglycoside phosphotransferase family.

The catalysed reaction is kanamycin A + ATP = kanamycin 3'-phosphate + ADP + H(+). Its function is as follows. Resistance to kanamycin and structurally-related aminoglycosides, including amikacin. The chain is Aminoglycoside 3'-phosphotransferase (aphA-6) from Acinetobacter baumannii.